Consider the following 137-residue polypeptide: Maltose regulon regulatory protein MalI (137 aa).

The region spanning 6 to 60 (VTITEVAKHAGVSVTTVSMVLGNKGRISPDTIEKVNASVEALGYIRNRAAANLRS) is the HTH lacI-type domain. A DNA-binding region (H-T-H motif) is located at residues 8–27 (ITEVAKHAGVSVTTVSMVLG).

Its function is as follows. Repressor for the malX and malY genes. The chain is Maltose regulon regulatory protein MalI (malI) from Vibrio furnissii.